The chain runs to 356 residues: sn-glycerol-3-phosphate import ATP-binding protein UgpC (356 aa).

The region spanning 4–235 is the ABC transporter domain; it reads LKLQAVTKSW…PASRFVASFI (232 aa). An ATP-binding site is contributed by 37–44; that stretch reads GPSGCGKS.

This sequence belongs to the ABC transporter superfamily. sn-glycerol-3-phosphate importer (TC 3.A.1.1.3) family. As to quaternary structure, the complex is composed of two ATP-binding proteins (UgpC), two transmembrane proteins (UgpA and UgpE) and a solute-binding protein (UgpB).

The protein resides in the cell inner membrane. It catalyses the reaction sn-glycerol 3-phosphate(out) + ATP + H2O = sn-glycerol 3-phosphate(in) + ADP + phosphate + H(+). Functionally, part of the ABC transporter complex UgpBAEC involved in sn-glycerol-3-phosphate (G3P) import. Responsible for energy coupling to the transport system. The protein is sn-glycerol-3-phosphate import ATP-binding protein UgpC of Salmonella paratyphi A (strain ATCC 9150 / SARB42).